A 382-amino-acid chain; its full sequence is Homoserine O-succinyltransferase (382 aa).

An AB hydrolase-1 domain is found at 51 to 359 (NAILVCHALS…EATQGHDAFL (309 aa)). The Nucleophile role is filled by serine 157. Arginine 227 contributes to the substrate binding site. Residues aspartate 322 and histidine 355 contribute to the active site. Residue aspartate 356 coordinates substrate.

The protein belongs to the AB hydrolase superfamily. MetX family. In terms of assembly, homodimer.

It is found in the cytoplasm. It catalyses the reaction L-homoserine + succinyl-CoA = O-succinyl-L-homoserine + CoA. The protein operates within amino-acid biosynthesis; L-methionine biosynthesis via de novo pathway; O-succinyl-L-homoserine from L-homoserine: step 1/1. Its function is as follows. Transfers a succinyl group from succinyl-CoA to L-homoserine, forming succinyl-L-homoserine. This is Homoserine O-succinyltransferase from Halorhodospira halophila (strain DSM 244 / SL1) (Ectothiorhodospira halophila (strain DSM 244 / SL1)).